Here is a 252-residue protein sequence, read N- to C-terminus: Mannose-P-dolichol utilization defect 1 protein homolog (252 aa).

Residues 34-100 form the PQ-loop 1 domain; sequence KALLSKGLGL…HGYPFSAWGD (67 aa). 7 helical membrane-spanning segments follow: residues 41 to 61, 69 to 89, 98 to 118, 126 to 146, 148 to 168, 180 to 200, and 207 to 227; these read LGLA…LKIL, INIV…SYNF, WGDS…VLFF, GLFL…LTPM, VLFT…LSQA, LSAA…FTSI, and MIIL…GQLI. The 55-residue stretch at 157 to 211 folds into the PQ-loop 2 domain; sequence IPILLVGKLSQAYTNYQAGSTGQLSAATVIMMFAGSVARIFTSIQETGDFMIILT.

It belongs to the MPDU1 (TC 2.A.43.3) family.

The protein localises to the membrane. The sequence is that of Mannose-P-dolichol utilization defect 1 protein homolog from Drosophila melanogaster (Fruit fly).